Reading from the N-terminus, the 527-residue chain is Light-independent protochlorophyllide reductase subunit B (527 aa).

Asp-36 lines the [4Fe-4S] cluster pocket. Catalysis depends on Asp-290, which acts as the Proton donor. Gly-425–Leu-426 provides a ligand contact to substrate.

The protein belongs to the ChlB/BchB/BchZ family. Protochlorophyllide reductase is composed of three subunits; ChlL, ChlN and ChlB. Forms a heterotetramer of two ChlB and two ChlN subunits. It depends on [4Fe-4S] cluster as a cofactor.

It carries out the reaction chlorophyllide a + oxidized 2[4Fe-4S]-[ferredoxin] + 2 ADP + 2 phosphate = protochlorophyllide a + reduced 2[4Fe-4S]-[ferredoxin] + 2 ATP + 2 H2O. It functions in the pathway porphyrin-containing compound metabolism; chlorophyll biosynthesis (light-independent). Its function is as follows. Component of the dark-operative protochlorophyllide reductase (DPOR) that uses Mg-ATP and reduced ferredoxin to reduce ring D of protochlorophyllide (Pchlide) to form chlorophyllide a (Chlide). This reaction is light-independent. The NB-protein (ChlN-ChlB) is the catalytic component of the complex. The chain is Light-independent protochlorophyllide reductase subunit B from Synechococcus sp. (strain RCC307).